The primary structure comprises 118 residues: Large ribosomal subunit protein bL20 (118 aa).

The protein belongs to the bacterial ribosomal protein bL20 family.

In terms of biological role, binds directly to 23S ribosomal RNA and is necessary for the in vitro assembly process of the 50S ribosomal subunit. It is not involved in the protein synthesizing functions of that subunit. The chain is Large ribosomal subunit protein bL20 from Caulobacter vibrioides (strain ATCC 19089 / CIP 103742 / CB 15) (Caulobacter crescentus).